Reading from the N-terminus, the 122-residue chain is Large ribosomal subunit protein uL14 (122 aa).

This sequence belongs to the universal ribosomal protein uL14 family. In terms of assembly, part of the 50S ribosomal subunit. Forms a cluster with proteins L3 and L19. In the 70S ribosome, L14 and L19 interact and together make contacts with the 16S rRNA in bridges B5 and B8.

In terms of biological role, binds to 23S rRNA. Forms part of two intersubunit bridges in the 70S ribosome. The protein is Large ribosomal subunit protein uL14 of Chlamydia trachomatis serovar L2 (strain ATCC VR-902B / DSM 19102 / 434/Bu).